We begin with the raw amino-acid sequence, 478 residues long: 3-isopropylmalate dehydratase large subunit (478 aa).

The [4Fe-4S] cluster site is built by C357, C418, and C421.

This sequence belongs to the aconitase/IPM isomerase family. LeuC type 1 subfamily. As to quaternary structure, heterodimer of LeuC and LeuD. [4Fe-4S] cluster is required as a cofactor.

It catalyses the reaction (2R,3S)-3-isopropylmalate = (2S)-2-isopropylmalate. The protein operates within amino-acid biosynthesis; L-leucine biosynthesis; L-leucine from 3-methyl-2-oxobutanoate: step 2/4. Functionally, catalyzes the isomerization between 2-isopropylmalate and 3-isopropylmalate, via the formation of 2-isopropylmaleate. This Novosphingobium aromaticivorans (strain ATCC 700278 / DSM 12444 / CCUG 56034 / CIP 105152 / NBRC 16084 / F199) protein is 3-isopropylmalate dehydratase large subunit.